Reading from the N-terminus, the 411-residue chain is Glutamyl-tRNA reductase (411 aa).

Substrate is bound by residues Thr-49–Arg-52, Ser-99, Glu-104–Glu-106, and Gln-110. The active-site Nucleophile is the Cys-50. Residue Gly-179–Gly-184 coordinates NADP(+).

This sequence belongs to the glutamyl-tRNA reductase family. In terms of assembly, homodimer.

The catalysed reaction is (S)-4-amino-5-oxopentanoate + tRNA(Glu) + NADP(+) = L-glutamyl-tRNA(Glu) + NADPH + H(+). The protein operates within porphyrin-containing compound metabolism; protoporphyrin-IX biosynthesis; 5-aminolevulinate from L-glutamyl-tRNA(Glu): step 1/2. Its function is as follows. Catalyzes the NADPH-dependent reduction of glutamyl-tRNA(Glu) to glutamate 1-semialdehyde (GSA). This Hyperthermus butylicus (strain DSM 5456 / JCM 9403 / PLM1-5) protein is Glutamyl-tRNA reductase.